The primary structure comprises 390 residues: Probable splicing factor YJU2B (390 aa).

The segment at 354–390 is disordered; it reads DACKASSSSEEENSIDSCATGKSLVADYSDSDSGSEV.

It belongs to the CWC16 family.

The protein resides in the nucleus. In terms of biological role, may be involved in mRNA splicing. In Danio rerio (Zebrafish), this protein is Probable splicing factor YJU2B (yju2b).